The following is a 401-amino-acid chain: Chalcone synthase 6 (401 aa).

The active site involves C168.

Belongs to the thiolase-like superfamily. Chalcone/stilbene synthases family.

The enzyme catalyses (E)-4-coumaroyl-CoA + 3 malonyl-CoA + 3 H(+) = 2',4,4',6'-tetrahydroxychalcone + 3 CO2 + 4 CoA. The protein operates within secondary metabolite biosynthesis; flavonoid biosynthesis. In terms of biological role, the primary product of this enzyme is 4,2',4',6'-tetrahydroxychalcone (also termed naringenin-chalcone or chalcone) which can under specific conditions spontaneously isomerize into naringenin. This Sorghum bicolor (Sorghum) protein is Chalcone synthase 6 (CHS6).